The following is a 577-amino-acid chain: F-box/TPR repeat protein pof3 (577 aa).

3 TPR repeats span residues 6–39 (VKAIKEKTQQYLSKRKFEDALTFITKTIEQEPNP), 41–74 (IDLFELRAQVYEKSGQYSQAELDAKRMIHLNARN), and 76–108 (RGYLRLGKLLQLDGFDKKADQLYTQGLRMVHKM). Positions 138–180 (ILPREVLLCILQQLNFKSIVQCMQVCKHWRDCIKKEPSLFCCL) constitute an F-box domain.

In terms of assembly, a part of the E3 ubiquitin ligase Skp1-Cullin-1-F-box (SCF) complex. Interacts with cul1, mcl1 and skp1.

The protein localises to the mitochondrion. The protein resides in the nucleus. In terms of biological role, has a role in substrate recognition in the Skp1-Cullin-1/Cdc53-F-box (SCF) ubiquitin ligase complex. Required for the maintenance of telomere length and transcriptional silencing at the telomere. Also required for chromosome segregation. This chain is F-box/TPR repeat protein pof3 (pof3), found in Schizosaccharomyces pombe (strain 972 / ATCC 24843) (Fission yeast).